Reading from the N-terminus, the 144-residue chain is Transcriptional regulator MraZ (144 aa).

SpoVT-AbrB domains are found at residues 5-50 (TFNH…ALPQ) and 81-124 (AHEV…DRAA).

It belongs to the MraZ family. Forms oligomers.

The protein resides in the cytoplasm. Its subcellular location is the nucleoid. In Anaeromyxobacter dehalogenans (strain 2CP-C), this protein is Transcriptional regulator MraZ.